A 108-amino-acid polypeptide reads, in one-letter code: UPF0060 membrane protein BH2744 (108 aa).

4 helical membrane-spanning segments follow: residues 6–26 (TLFL…WLWL), 31–51 (PVYL…IATF), 60–80 (VYAA…WWID), and 86–106 (TYDW…LWAP).

The protein belongs to the UPF0060 family.

The protein resides in the cell membrane. This is UPF0060 membrane protein BH2744 from Halalkalibacterium halodurans (strain ATCC BAA-125 / DSM 18197 / FERM 7344 / JCM 9153 / C-125) (Bacillus halodurans).